Consider the following 391-residue polypeptide: Ferrochelatase (391 aa).

Fe cation contacts are provided by H196 and E281.

Belongs to the ferrochelatase family.

The protein localises to the cytoplasm. The catalysed reaction is heme b + 2 H(+) = protoporphyrin IX + Fe(2+). It participates in porphyrin-containing compound metabolism; protoheme biosynthesis; protoheme from protoporphyrin-IX: step 1/1. In terms of biological role, catalyzes the ferrous insertion into protoporphyrin IX. In Prochlorococcus marinus (strain NATL2A), this protein is Ferrochelatase.